The following is a 129-amino-acid chain: Large ribosomal subunit protein bL20 (129 aa).

This sequence belongs to the bacterial ribosomal protein bL20 family.

Binds directly to 23S ribosomal RNA and is necessary for the in vitro assembly process of the 50S ribosomal subunit. It is not involved in the protein synthesizing functions of that subunit. This is Large ribosomal subunit protein bL20 from Mycobacterium leprae (strain Br4923).